The primary structure comprises 629 residues: uncharacterized protein (629 aa).

The region spanning 4–255 (LKAENLYKTY…KRAEREAQAE (252 aa)) is the ABC transporter 1 domain. 36–43 (GPNGTGKS) is an ATP binding site. Residues 284 to 304 (KARIDRVETLKEQTGPQSSGS) form a disordered region. A compositionally biased stretch (basic and acidic residues) spans 285–294 (ARIDRVETLK). A compositionally biased stretch (polar residues) spans 295–304 (EQTGPQSSGS). Residues 319–537 (IEAENVMIAY…EESKAKKAAP (219 aa)) form the ABC transporter 2 domain. ATP is bound at residue 351–358 (GPNGIGKT). The disordered stretch occupies residues 530-555 (SKAKKAAPKPAAEEKTAEAEPKKKRK). The span at 540-550 (AAEEKTAEAEP) shows a compositional bias: basic and acidic residues. Positions 560-629 (KDQLEWDGIE…LSLMIEELES (70 aa)) form a coiled coil.

This sequence belongs to the ABC transporter superfamily.

This is an uncharacterized protein from Bacillus subtilis (strain 168).